The sequence spans 558 residues: Arginine--tRNA ligase (558 aa).

Positions 134 to 144 match the 'HIGH' region motif; sequence ANPTGPMVLVQ.

This sequence belongs to the class-I aminoacyl-tRNA synthetase family. Monomer.

The protein localises to the cytoplasm. It catalyses the reaction tRNA(Arg) + L-arginine + ATP = L-arginyl-tRNA(Arg) + AMP + diphosphate. In Symbiobacterium thermophilum (strain DSM 24528 / JCM 14929 / IAM 14863 / T), this protein is Arginine--tRNA ligase.